A 214-amino-acid chain; its full sequence is Small ribosomal subunit protein uS5 (214 aa).

In terms of domain architecture, S5 DRBM spans 54 to 117 (LKYEVVDIKV…RDAKMNILPV (64 aa)).

Belongs to the universal ribosomal protein uS5 family. Part of the 30S ribosomal subunit. Contacts protein S4.

With S4 and S12 plays an important role in translational accuracy. In Saccharolobus islandicus (strain Y.N.15.51 / Yellowstone #2) (Sulfolobus islandicus), this protein is Small ribosomal subunit protein uS5.